Here is a 655-residue protein sequence, read N- to C-terminus: Mannosyl-oligosaccharide 1,2-alpha-mannosidase IA (655 aa).

Over 1 to 43 (MPVGGLLPLFSSPGGGGLGSGLGGGLGGGRKGSGPAAFRLTEK) the chain is Cytoplasmic. The chain crosses the membrane as a helical; Signal-anchor for type II membrane protein span at residues 44–64 (FVLLLVFSAFITLCFGAIFFL). Residues 65–655 (PDSSKLLSGV…QKKEIDGKEK (591 aa)) are Lumenal-facing. A disulfide bond links Cys-478 and Cys-510. The N-linked (GlcNAc...) asparagine glycan is linked to Asn-515. The active-site Proton donor is the Glu-524. Thr-635 is a Ca(2+) binding site.

The protein belongs to the glycosyl hydrolase 47 family. It depends on Ca(2+) as a cofactor. N-linked glycan at Asn-515 consists of Man(6)-GlcNAc(2).

It is found in the golgi apparatus membrane. The catalysed reaction is N(4)-(alpha-D-Man-(1-&gt;2)-alpha-D-Man-(1-&gt;2)-alpha-D-Man-(1-&gt;3)-[alpha-D-Man-(1-&gt;2)-alpha-D-Man-(1-&gt;3)-[alpha-D-Man-(1-&gt;2)-alpha-D-Man-(1-&gt;6)]-alpha-D-Man-(1-&gt;6)]-beta-D-Man-(1-&gt;4)-beta-D-GlcNAc-(1-&gt;4)-beta-D-GlcNAc)-L-asparaginyl-[protein] (N-glucan mannose isomer 9A1,2,3B1,2,3) + 4 H2O = N(4)-(alpha-D-Man-(1-&gt;3)-[alpha-D-Man-(1-&gt;3)-[alpha-D-Man-(1-&gt;6)]-alpha-D-Man-(1-&gt;6)]-beta-D-Man-(1-&gt;4)-beta-D-GlcNAc-(1-&gt;4)-beta-D-GlcNAc)-L-asparaginyl-[protein] (N-glucan mannose isomer 5A1,2) + 4 beta-D-mannose. It carries out the reaction N(4)-(alpha-D-Man-(1-&gt;2)-alpha-D-Man-(1-&gt;2)-alpha-D-Man-(1-&gt;3)-[alpha-D-Man-(1-&gt;3)-[alpha-D-Man-(1-&gt;2)-alpha-D-Man-(1-&gt;6)]-alpha-D-Man-(1-&gt;6)]-beta-D-Man-(1-&gt;4)-beta-D-GlcNAc-(1-&gt;4)-beta-D-GlcNAc)-L-asparaginyl-[protein] (N-glucan mannose isomer 8A1,2,3B1,3) + 3 H2O = N(4)-(alpha-D-Man-(1-&gt;3)-[alpha-D-Man-(1-&gt;3)-[alpha-D-Man-(1-&gt;6)]-alpha-D-Man-(1-&gt;6)]-beta-D-Man-(1-&gt;4)-beta-D-GlcNAc-(1-&gt;4)-beta-D-GlcNAc)-L-asparaginyl-[protein] (N-glucan mannose isomer 5A1,2) + 3 beta-D-mannose. Its pathway is protein modification; protein glycosylation. Its activity is regulated as follows. Inhibited by both 1-deoxymannojirimycin and kifunensine. Its function is as follows. Involved in the maturation of Asn-linked oligosaccharides. Progressively trim alpha-1,2-linked mannose residues from Man(9)GlcNAc(2) to produce Man(5)GlcNAc(2). The sequence is that of Mannosyl-oligosaccharide 1,2-alpha-mannosidase IA (Man1a1) from Mus musculus (Mouse).